Here is a 122-residue protein sequence, read N- to C-terminus: MIQQESRLRVADNTGAKEILTIRVLGGSGRRYAGIGDVIVATVKDAIPGGNVKKGDVVKAVIVRTVKERRRQDGSYIRFDENAAVILKNDGDPRGTRIFGPVGRELREKKFMKIISLAPEVL.

This sequence belongs to the universal ribosomal protein uL14 family. In terms of assembly, part of the 50S ribosomal subunit. Forms a cluster with proteins L3 and L19. In the 70S ribosome, L14 and L19 interact and together make contacts with the 16S rRNA in bridges B5 and B8.

Binds to 23S rRNA. Forms part of two intersubunit bridges in the 70S ribosome. In Streptomyces griseus subsp. griseus (strain JCM 4626 / CBS 651.72 / NBRC 13350 / KCC S-0626 / ISP 5235), this protein is Large ribosomal subunit protein uL14.